A 1120-amino-acid polypeptide reads, in one-letter code: Putative GTPase-activating protein AN11010 (1120 aa).

The 189-residue stretch at 291-479 (GLPNRLRGEI…RVLDVFFLEG (189 aa)) folds into the Rab-GAP TBC domain. 5 disordered regions span residues 673-702 (DSPGPSRKQSDSGSFRGLGRPTMNKRPSPA), 859-903 (DEVK…PNNP), 960-979 (AAKQQPTSSGPTVAGASGGI), 1017-1068 (RNAL…ETDR), and 1081-1120 (GKDDVSLLDDKDSHQESSSGQRTAAGSDDKVVSKVVEFES). Residues 864–878 (ESTPSPEGETPGTPS) show a composition bias toward low complexity. The segment covering 960-970 (AAKQQPTSSGP) has biased composition (polar residues). Residues 1023–1032 (DDDDEDDEDD) are compositionally biased toward acidic residues. Basic and acidic residues-rich tracts occupy residues 1057-1068 (DPERRSVRETDR) and 1081-1095 (GKDDVSLLDDKDSHQ).

The protein is Putative GTPase-activating protein AN11010 of Emericella nidulans (strain FGSC A4 / ATCC 38163 / CBS 112.46 / NRRL 194 / M139) (Aspergillus nidulans).